A 503-amino-acid polypeptide reads, in one-letter code: MAAALRFDNIGKVFPGVRALDGISFDVQAGQVHGLMGENGAGKSTLLKILGGEYQPDSGSVLVDGRAMRFPSAAASIAAGVAVIHQELQYVPDLTVAENLLLGRLPSALGWVRKRDAQRFVRERLAAMGVDLDAQAKLRRLSIAQRQMVEICKALLRNARVIALDEPTSSLSHRETEVLFKLVDDLRRDGRALIYISHRMDEIYRLCDACTIFRDGRQVASHASLANVPRETLVRQMVGREISDIYHYAPRALGDVRLSARALEGDALRAGASFDVRAGEIVGFFGLVGAGRSELMRVIYGAQRRTGGALTLDGEPLDIRSTRDAIRRGIVLCPEDRKEEGIVAHASVAENINISCRRHGLRAGLFLDRKREAETADRFIKLLKIKTPNRRQKIRFLSGGNQQKAILARWLAEPDLKVVILDEPTRGIDVGAKHEIYGVIYELAKRGCAIVMVSSELPEVLGVSDRIVVMSEGRIAGELARGEANEEAVLNLALPQGATAHAA.

ABC transporter domains lie at 5–240 (LRFD…MVGR) and 253–497 (LGDV…LPQG). Residue 37–44 (GENGAGKS) participates in ATP binding.

This sequence belongs to the ABC transporter superfamily. Arabinose importer (TC 3.A.1.2.2) family. As to quaternary structure, the complex is composed of two ATP-binding proteins (AraG), two transmembrane proteins (AraH) and a solute-binding protein (AraF).

It is found in the cell inner membrane. The catalysed reaction is L-arabinose(out) + ATP + H2O = L-arabinose(in) + ADP + phosphate + H(+). Its function is as follows. Part of the ABC transporter complex AraFGH involved in arabinose import. Responsible for energy coupling to the transport system. This chain is Arabinose import ATP-binding protein AraG, found in Burkholderia pseudomallei (strain K96243).